A 916-amino-acid chain; its full sequence is Major intrinsically disordered Notch2-binding receptor 1 (916 aa).

At 1-891 (METSQETSLF…AEFRRAKVCK (891 aa)) the chain is on the cytoplasmic side. Disordered stretches follow at residues 390 to 409 (EEKL…PAPE), 553 to 591 (KSDC…SEEE), 648 to 675 (SLTS…GPKL), 705 to 726 (TRPS…IASI), and 745 to 782 (NEEE…LPKQ). 2 stretches are compositionally biased toward basic and acidic residues: residues 553-564 (KSDCDSSPEHNL) and 575-591 (KGDK…SEEE). A Phosphoserine modification is found at Ser711. The span at 750 to 771 (KDTGPGDNKDWHRKSKEADRQY) shows a compositional bias: basic and acidic residues. Residues 892 to 912 (IAALIAAAACTVILVIVVPIC) traverse the membrane as a helical segment. The Extracellular portion of the chain corresponds to 913–916 (TMKS).

It belongs to the MINAR family. In terms of assembly, interacts with NOTCH2; this interaction increases MINAR1 stability. Interacts (via N-terminus) with DEPTOR (via PDZ domain); this interaction may stabilize DEPTOR protein by impairing its ubiquitination. As to expression, widely expressed, including in breast epithelial cells and endothelial cells (at protein level). Expression is down-regulated in advanced breast tumors (at protein level).

It localises to the cell membrane. Functionally, intrinsically disordered protein which may negatively regulate mTOR signaling pathway by stabilizing the mTOR complex component DEPTOR. Negatively regulates angiogenesis. Negatively regulates cell growth. Negatively regulates neurite outgrowth in hippocampal neurons. The chain is Major intrinsically disordered Notch2-binding receptor 1 from Homo sapiens (Human).